We begin with the raw amino-acid sequence, 68 residues long: uncharacterized protein (68 aa).

Transmembrane regions (helical) follow at residues 1–21 (MLFIPPPLLCLFIAIAMYFLP) and 28–48 (VHFSVIVFVISLSFLIALSSV).

The protein resides in the cell membrane. This is an uncharacterized protein from Haemophilus influenzae (strain ATCC 51907 / DSM 11121 / KW20 / Rd).